A 276-amino-acid chain; its full sequence is 2-hydroxy-6-oxo-2,4-heptadienoate hydrolase (276 aa).

The AB hydrolase-1 domain maps to 28 to 259 (NPVVLVHGSG…GRCGHWVQIE (232 aa)). Active-site residues include Ser-105, Asp-226, and His-254.

It belongs to the DmpD/TodF/XylF esterase family.

The catalysed reaction is (2Z,4E)-2-hydroxy-6-oxohepta-2,4-dienoate + H2O = (2Z)-2-hydroxypenta-2,4-dienoate + acetate + H(+). The protein operates within xenobiotic degradation; toluene degradation. Functionally, catalyzes the hydrolysis of 2-hydroxy-6-oxohepta-2,4-dienoate into 2-hydroxypenta-2,4-dienoate and acetate. This Pseudomonas putida (strain ATCC 700007 / DSM 6899 / JCM 31910 / BCRC 17059 / LMG 24140 / F1) protein is 2-hydroxy-6-oxo-2,4-heptadienoate hydrolase (todF).